An 877-amino-acid chain; its full sequence is Dynamin (877 aa).

The 267-residue stretch at Q23 to P289 folds into the Dynamin-type G domain. The segment at G33–S40 is G1 motif. A GTP-binding site is contributed by G33–S41. Residues V59–R61 are G2 motif. The G3 motif stretch occupies residues D131–G134. The G4 motif stretch occupies residues T200–D203. Residues T200–D206 and N231–Q234 contribute to the GTP site. Positions V230 to S233 are G5 motif. The 109-residue stretch at Q513–V621 folds into the PH domain. Disordered regions lie at residues P623–R648 and T740–V834. A compositionally biased stretch (acidic residues) spans E630–S641. The GED domain maps to V650 to V741. S756, S764, and S767 each carry phosphoserine. The segment covering P788–L826 has biased composition (pro residues).

Belongs to the TRAFAC class dynamin-like GTPase superfamily. Dynamin/Fzo/YdjA family.

The protein resides in the cytoplasm. It is found in the cytoskeleton. The enzyme catalyses GTP + H2O = GDP + phosphate + H(+). In terms of biological role, microtubule-associated force-producing protein which is involved in the production of microtubule bundles and which is able to bind and hydrolyze GTP. Implicated in endocytic protein sorting. This is Dynamin (shi) from Drosophila melanogaster (Fruit fly).